Consider the following 496-residue polypeptide: Lysine--tRNA ligase (496 aa).

Positions 409 and 416 each coordinate Mg(2+).

Belongs to the class-II aminoacyl-tRNA synthetase family. Homodimer. The cofactor is Mg(2+).

Its subcellular location is the cytoplasm. The enzyme catalyses tRNA(Lys) + L-lysine + ATP = L-lysyl-tRNA(Lys) + AMP + diphosphate. In Streptococcus gordonii (strain Challis / ATCC 35105 / BCRC 15272 / CH1 / DL1 / V288), this protein is Lysine--tRNA ligase.